The chain runs to 445 residues: Amino-acid acetyltransferase (445 aa).

An N-acetyltransferase domain is found at 299-438 (EQVRQAQIDD…QGLYNYQRNS (140 aa)).

This sequence belongs to the acetyltransferase family. ArgA subfamily.

It localises to the cytoplasm. The catalysed reaction is L-glutamate + acetyl-CoA = N-acetyl-L-glutamate + CoA + H(+). It functions in the pathway amino-acid biosynthesis; L-arginine biosynthesis; N(2)-acetyl-L-ornithine from L-glutamate: step 1/4. The polypeptide is Amino-acid acetyltransferase (Vibrio atlanticus (strain LGP32) (Vibrio splendidus (strain Mel32))).